The chain runs to 30 residues: Toxic protein AapA1 (30 aa).

It belongs to the AapA toxin family.

Its subcellular location is the cell inner membrane. Transcription of the aapA1 gene generates a full-length transcript whose folding impedes translation. Processing of the 3' end of the aapA1 message generates a shorter transcript that becomes translatable after a structural rearrangement. The processing also makes it more susceptible to forming dsRNA with IsoA1 which leads to duplex RNA degradation by RNase 3 (rnc). Its function is as follows. May be involved in response to oxidative stress. Toxic component of a type I toxin-antitoxin (TA) system. When overexpression is induced in situ in the absence of its cognate antisense RNA antitoxin IsoA1 it leads to cell growth arrest and cell death without lysis. Neutralized by IsoA1 RNA which forms an extensive duplex with the mRNA. Binds artificial prokaryotic and eukaryotic lipid membranes, with 30-fold higher affinity for prokaryotic membranes. Molecular dynamics suggests the peptide penetrates the membrane leading to lipid reorganization and thinning of the bilayer. Induction of toxin in the absence of antitoxin RNA causes a fast conversion of cells from spiral-shaped to coccoid forms; cells have no visible membrane defects and resemble wild-type 'aging coccoids'. Toxin causes a moderate decrease in membrane potential and ATP content and alterations in peptidoglycan muropeptide abundance; GlcNAc-MurNAc dipeptides increase while GlcNAc-MurNAc tripeptides decrease (i.e. a faster phenocopy of cell aging). Deletion of all 6 AapA/IsoA TA loci in strain B128 leads to slower than wild-type conversion of H2O2-treated cells to the coccoid form. This suggests oxidative stress triggers coccoid transformation via these type I TA systems, although other factors eventually drive the morphology change. This is Toxic protein AapA1 from Helicobacter pylori (strain ATCC 700392 / 26695) (Campylobacter pylori).